The primary structure comprises 161 residues: Allophycocyanin alpha chain (161 aa).

N71 is subject to N4-methylasparagine. C81 lines the (2R,3E)-phycocyanobilin pocket.

This sequence belongs to the phycobiliprotein family. As to quaternary structure, heterodimer of an alpha and a beta chain. In terms of processing, contains one covalently linked phycocyanobilin chromophore.

It is found in the plastid. The protein resides in the chloroplast thylakoid membrane. Functionally, light-harvesting photosynthetic bile pigment-protein from the phycobiliprotein complex. Allophycocyanin has a maximum absorption at approximately 650 nanometers. The protein is Allophycocyanin alpha chain (apcA) of Aglaothamnion neglectum (Red alga).